A 593-amino-acid polypeptide reads, in one-letter code: Proline--tRNA ligase (593 aa).

The protein belongs to the class-II aminoacyl-tRNA synthetase family. ProS type 1 subfamily. In terms of assembly, homodimer.

It is found in the cytoplasm. The enzyme catalyses tRNA(Pro) + L-proline + ATP = L-prolyl-tRNA(Pro) + AMP + diphosphate. Its function is as follows. Catalyzes the attachment of proline to tRNA(Pro) in a two-step reaction: proline is first activated by ATP to form Pro-AMP and then transferred to the acceptor end of tRNA(Pro). As ProRS can inadvertently accommodate and process non-cognate amino acids such as alanine and cysteine, to avoid such errors it has two additional distinct editing activities against alanine. One activity is designated as 'pretransfer' editing and involves the tRNA(Pro)-independent hydrolysis of activated Ala-AMP. The other activity is designated 'posttransfer' editing and involves deacylation of mischarged Ala-tRNA(Pro). The misacylated Cys-tRNA(Pro) is not edited by ProRS. The chain is Proline--tRNA ligase from Synechococcus sp. (strain CC9605).